The chain runs to 140 residues: ATP synthase epsilon chain (140 aa).

This sequence belongs to the ATPase epsilon chain family. F-type ATPases have 2 components, CF(1) - the catalytic core - and CF(0) - the membrane proton channel. CF(1) has five subunits: alpha(3), beta(3), gamma(1), delta(1), epsilon(1). CF(0) has three main subunits: a, b and c.

The protein localises to the cell inner membrane. Produces ATP from ADP in the presence of a proton gradient across the membrane. This chain is ATP synthase epsilon chain, found in Xanthomonas campestris pv. campestris (strain 8004).